Reading from the N-terminus, the 246-residue chain is MADS-box transcription factor 14 (246 aa).

The 61-residue stretch at 1 to 61 (MGRGKVQLKR…GKLYEYATDS (61 aa)) folds into the MADS-box domain. The 91-residue stretch at 88-178 (QGNWCHEYRK…QKELVEKQKV (91 aa)) folds into the K-box domain. The interval 180–199 (KQQVQWDQTQPQTSSSSSSF) is disordered.

As to quaternary structure, may interact with the K-box of MADS1 and MADS6. Highly expressed in sterile lemmas, at intermediate levels in stamens, and weakly in lemmas, paleas and carpels.

The protein localises to the nucleus. Functionally, probable transcription factor. May be involved in the control of flowering time. This Oryza sativa subsp. japonica (Rice) protein is MADS-box transcription factor 14 (MADS14).